Consider the following 124-residue polypeptide: Alpha-amylase inhibitor 0.53 (124 aa).

4 disulfide bridges follow: Cys-20–Cys-41, Cys-28–Cys-83, Cys-42–Cys-99, and Cys-54–Cys-115.

This sequence belongs to the protease inhibitor I6 (cereal trypsin/alpha-amylase inhibitor) family. As to quaternary structure, homodimer. The disulfide bonds are essential for the inhibitor activity. As to expression, endosperm.

The protein localises to the secreted. In terms of biological role, alpha-amylase inhibitor. This is Alpha-amylase inhibitor 0.53 from Triticum aestivum (Wheat).